The sequence spans 395 residues: Sensor protein DltS (395 aa).

2 helical membrane passes run 9 to 29 (FVFL…AVSN) and 136 to 156 (FLIL…SLYL). One can recognise a Histidine kinase domain in the interval 177 to 387 (DASHELKTPI…RLEVQLPIDG (211 aa)). A Phosphohistidine; by autocatalysis modification is found at His-180.

Its subcellular location is the cell membrane. The catalysed reaction is ATP + protein L-histidine = ADP + protein N-phospho-L-histidine.. Member of the two-component regulatory system DltS/DltR. Regulates the expression of the dlt operon. Probably phosphorylates DltR. The protein is Sensor protein DltS (dltS) of Streptococcus agalactiae serotype V (strain ATCC BAA-611 / 2603 V/R).